Here is a 98-residue protein sequence, read N- to C-terminus: Large ribosomal subunit protein uL23 (98 aa).

It belongs to the universal ribosomal protein uL23 family. In terms of assembly, part of the 50S ribosomal subunit. Contacts protein L29, and trigger factor when it is bound to the ribosome.

One of the early assembly proteins it binds 23S rRNA. One of the proteins that surrounds the polypeptide exit tunnel on the outside of the ribosome. Forms the main docking site for trigger factor binding to the ribosome. In Alcanivorax borkumensis (strain ATCC 700651 / DSM 11573 / NCIMB 13689 / SK2), this protein is Large ribosomal subunit protein uL23.